Reading from the N-terminus, the 183-residue chain is NADH-ubiquinone oxidoreductase chain 5 (183 aa).

4 consecutive transmembrane segments (helical) span residues 7–27 (FMCY…GDNS), 30–50 (LFLG…FWFT), 111–131 (AITL…AQIG), and 144–164 (TPVS…FMIA).

Belongs to the complex I subunit 5 family.

It localises to the mitochondrion inner membrane. The enzyme catalyses a ubiquinone + NADH + 5 H(+)(in) = a ubiquinol + NAD(+) + 4 H(+)(out). In terms of biological role, core subunit of the mitochondrial membrane respiratory chain NADH dehydrogenase (Complex I) that is believed to belong to the minimal assembly required for catalysis. Complex I functions in the transfer of electrons from NADH to the respiratory chain. The immediate electron acceptor for the enzyme is believed to be ubiquinone. The protein is NADH-ubiquinone oxidoreductase chain 5 (NDH5) of Pisum sativum (Garden pea).